The sequence spans 484 residues: Dolichyl-P-Man:Man5GlcNAc2-PP-dolichol alpha-1,3-mannosyltransferase l(2)not2 (484 aa).

Over 1-43 the chain is Cytoplasmic; that stretch reads MAPPKAASHRPAVRRKKSGTLVDSILDKYLNVRFFKYLLLEPA. The chain crosses the membrane as a helical span at residues 44–64; sequence ALPIVGLFVLLAELVINVVVI. Topologically, residues 65-97 are lumenal; it reads QRVPYTEIDWVAYMQECEGFLNGTTNYSLLRGD. The helical transmembrane segment at 98 to 118 threads the bilayer; it reads TGPLVYPAAFVYIYSALYYVT. The Cytoplasmic segment spans residues 119-125; the sequence is SHGTNVR. The helical transmembrane segment at 126–146 threads the bilayer; sequence LAQYIFAGIYLLQLALVLRLY. Topologically, residues 147 to 171 are lumenal; that stretch reads SKSRKVPPYVLVLSAFTSYRIHSIY. Residues 172–192 traverse the membrane as a helical segment; that stretch reads VLRLFNDPVAVLLLYAALNLF. At 193–211 the chain is on the cytoplasmic side; that stretch reads LDRRWTLGSTFFSLAVGVK. Residues 212 to 232 form a helical membrane-spanning segment; that stretch reads MNILLFAPALLLFYLANLGLL. Residue Arg-233 is a topological domain, lumenal. The helical transmembrane segment at 234–254 threads the bilayer; that stretch reads TILQLAVCGVIQLLLGAPFLL. Residues 255-294 are Cytoplasmic-facing; that stretch reads THPVEYLRGSFDLGRIFEHKWTVNYRFLSRDVFENRTFHV. A helical transmembrane segment spans residues 295–315; the sequence is SLLGLHLLLLLAFAKPTWTFF. At 316 to 403 the chain is on the lumenal side; it reads QSYVRLRRIE…YGIHFDRCTQ (88 aa). A helical transmembrane segment spans residues 404-424; the sequence is LALLPFFLCNLVGVACSRSLH. Residues 425–426 lie on the Cytoplasmic side of the membrane; it reads YQ. A helical membrane pass occupies residues 427–447; that stretch reads FYVWYFHSLPYLAWSTPYSLG. Over 448-484 the chain is Lumenal; sequence VRCLILGLIEYCWNTYPSTNFSSAALHFTHIIPPYQL.

It belongs to the glycosyltransferase ALG3 family.

The protein localises to the endoplasmic reticulum membrane. It catalyses the reaction an alpha-D-Man-(1-&gt;2)-alpha-D-Man-(1-&gt;2)-alpha-D-Man-(1-&gt;3)-[alpha-D-Man-(1-&gt;6)]-beta-D-Man-(1-&gt;4)-beta-D-GlcNAc-(1-&gt;4)-alpha-D-GlcNAc-diphospho-di-trans,poly-cis-dolichol + a di-trans,poly-cis-dolichyl beta-D-mannosyl phosphate = an alpha-D-Man-(1-&gt;2)-alpha-D-Man-(1-&gt;2)-alpha-D-Man-(1-&gt;3)-[alpha-D-Man-(1-&gt;3)-alpha-D-Man-(1-&gt;6)]-beta-D-Man-(1-&gt;4)-beta-D-GlcNAc-(1-&gt;4)-alpha-D-GlcNAc-diphospho-di-trans,poly-cis-dolichol + a di-trans,poly-cis-dolichyl phosphate + H(+). The protein operates within protein modification; protein glycosylation. In terms of biological role, probable alpha-1,3-mannosyltransferase involved in the N-glycosylation pathway. Involved in glycosylation of the TNF receptor grnd, regulating its ligand affinity. Required for normal epithelial growth and architecture. Suppressor of JNK-dependent intestinal stem cell proliferation. The polypeptide is Dolichyl-P-Man:Man5GlcNAc2-PP-dolichol alpha-1,3-mannosyltransferase l(2)not2 (Drosophila melanogaster (Fruit fly)).